The primary structure comprises 617 residues: V-type proton ATPase catalytic subunit A (617 aa).

250 to 257 (GAFGCGKT) contacts ATP.

Belongs to the ATPase alpha/beta chains family. In terms of assembly, V-ATPase is a heteromultimeric enzyme made up of two complexes: the ATP-hydrolytic V1 complex and the proton translocation V0 complex. The V1 complex consists of three catalytic AB heterodimers that form a heterohexamer, three peripheral stalks each consisting of EG heterodimers, one central rotor including subunits D and F, and the regulatory subunits C and H. The proton translocation complex V0 consists of the proton transport subunit a, a ring of proteolipid subunits c9c'', rotary subunit d, subunits e and f, and the accessory subunits VhaAC45 and ATP6AP2.

It carries out the reaction ATP + H2O + 4 H(+)(in) = ADP + phosphate + 5 H(+)(out). With respect to regulation, ATP hydrolysis occurs at the interface between the nucleotide-binding domains of subunits A and B. ATP hydrolysis triggers a conformational change in the subunits D and F, which induces a shift of subunit d. The c-ring is subsequently rotated and results in a continuous proton translocation across the membrane. Functionally, catalytic subunit of the V1 complex of vacuolar(H+)-ATPase (V-ATPase), a multisubunit enzyme composed of a peripheral complex (V1) that hydrolyzes ATP and a membrane integral complex (V0) that translocates protons. V-ATPase is responsible for acidifying and maintaining the pH of intracellular compartments and in some cell types, is targeted to the plasma membrane, where it is responsible for acidifying the extracellular environment. This is V-type proton ATPase catalytic subunit A (VHAA) from Manduca sexta (Tobacco hawkmoth).